The sequence spans 705 residues: Ribosomal RNA large subunit methyltransferase K/L (705 aa).

A THUMP domain is found at Leu-43 to Leu-154.

This sequence belongs to the methyltransferase superfamily. RlmKL family.

The protein resides in the cytoplasm. The catalysed reaction is guanosine(2445) in 23S rRNA + S-adenosyl-L-methionine = N(2)-methylguanosine(2445) in 23S rRNA + S-adenosyl-L-homocysteine + H(+). The enzyme catalyses guanosine(2069) in 23S rRNA + S-adenosyl-L-methionine = N(2)-methylguanosine(2069) in 23S rRNA + S-adenosyl-L-homocysteine + H(+). Functionally, specifically methylates the guanine in position 2445 (m2G2445) and the guanine in position 2069 (m7G2069) of 23S rRNA. In Pectobacterium atrosepticum (strain SCRI 1043 / ATCC BAA-672) (Erwinia carotovora subsp. atroseptica), this protein is Ribosomal RNA large subunit methyltransferase K/L.